The chain runs to 209 residues: Small ribosomal subunit protein uS3 (209 aa).

The 70-residue stretch at 17-86 (IDEFLEKELR…NPQIEVEEIK (70 aa)) folds into the KH type-2 domain.

It belongs to the universal ribosomal protein uS3 family. As to quaternary structure, part of the 30S ribosomal subunit.

Functionally, binds the lower part of the 30S subunit head. This is Small ribosomal subunit protein uS3 from Thermococcus kodakarensis (strain ATCC BAA-918 / JCM 12380 / KOD1) (Pyrococcus kodakaraensis (strain KOD1)).